The chain runs to 299 residues: Taste receptor type 2 member 50 (299 aa).

A topological domain (extracellular) is located at residue Met1. Residues 2–22 (ITFLYIFFSILILVLFVLGNF) traverse the membrane as a helical segment. The Cytoplasmic portion of the chain corresponds to 23-55 (ANGFIALVNFIDWVKRKKISSADQILTALAVSR). Residues 56–76 (IGLLWALLLNWYLTVLNPAFY) traverse the membrane as a helical segment. Over 77–87 (SVELRITSYNA) the chain is Extracellular. The chain crosses the membrane as a helical span at residues 88-108 (WVVTNHFSMWLAASLSIFYLL). At 109-126 (KIANFSNLIFLHLKRRVR) the chain is on the cytoplasmic side. The chain crosses the membrane as a helical span at residues 127–147 (SVILVILLGTLIFLVCHLLVA). Residues 148–181 (NMDESMWAEEYEGNMTGKMKLRNTVHLSYLTVTT) are Extracellular-facing. The N-linked (GlcNAc...) asparagine glycan is linked to Asn161. A helical transmembrane segment spans residues 182 to 202 (LWSFIPFTLSLISFLMLICSL). Topologically, residues 203 to 229 (CKHLKKMQLHGEGSQDLSTKVHIKALQ) are cytoplasmic. The chain crosses the membrane as a helical span at residues 230–250 (TLISFLLLCAIFFLFLIISVW). Residues 251–259 (SPRRLQNDP) lie on the Extracellular side of the membrane. The chain crosses the membrane as a helical span at residues 260-280 (VVMVSKAVGNIYLAFDSFILI). The Cytoplasmic portion of the chain corresponds to 281-299 (WRTKKLKHTFLLILCQIRC).

The protein belongs to the G-protein coupled receptor T2R family.

It is found in the membrane. Functionally, receptor that may play a role in the perception of bitterness and is gustducin-linked. May play a role in sensing the chemical composition of the gastrointestinal content. The activity of this receptor may stimulate alpha gustducin, mediate PLC-beta-2 activation and lead to the gating of TRPM5. In Gorilla gorilla gorilla (Western lowland gorilla), this protein is Taste receptor type 2 member 50 (TAS2R50).